Consider the following 157-residue polypeptide: Lipoprotein signal peptidase (157 aa).

3 helical membrane passes run 10-30, 58-78, and 84-104; these read LVFMGVFFLIFGVDQAIKYAI, FLEGGLKYLQILLILGLFIFL, and LFKNHAIEFGMVFGAGVSNVL. Catalysis depends on residues Asp114 and Asp131. The chain crosses the membrane as a helical span at residues 122 to 142; sequence FDFAIFNFADVMIDVGVGVLL.

This sequence belongs to the peptidase A8 family.

Its subcellular location is the cell inner membrane. The enzyme catalyses Release of signal peptides from bacterial membrane prolipoproteins. Hydrolyzes -Xaa-Yaa-Zaa-|-(S,diacylglyceryl)Cys-, in which Xaa is hydrophobic (preferably Leu), and Yaa (Ala or Ser) and Zaa (Gly or Ala) have small, neutral side chains.. It participates in protein modification; lipoprotein biosynthesis (signal peptide cleavage). Functionally, this protein specifically catalyzes the removal of signal peptides from prolipoproteins. This is Lipoprotein signal peptidase from Helicobacter pylori (strain ATCC 700392 / 26695) (Campylobacter pylori).